The chain runs to 342 residues: Inositol-tetrakisphosphate 1-kinase 5 (342 aa).

1D-myo-inositol 1,3,4-trisphosphate is bound by residues Lys25 and Lys67. The ATP site is built by Arg102 and Lys154. The 1D-myo-inositol 1,3,4-trisphosphate site is built by His165 and Lys197. Residues Gln186–Lys197 and Ser212 contribute to the ATP site. Positions 283, 298, and 300 each coordinate Mg(2+). Position 300 (Asn300) interacts with 1D-myo-inositol 1,3,4-trisphosphate.

This sequence belongs to the ITPK1 family. As to quaternary structure, monomer. The cofactor is Mg(2+). As to expression, expressed in roots, leaves, flowers, anthers and embryos.

It carries out the reaction 1D-myo-inositol 3,4,5,6-tetrakisphosphate + ATP = 1D-myo-inositol 1,3,4,5,6-pentakisphosphate + ADP + H(+). The enzyme catalyses 1D-myo-inositol 1,3,4-trisphosphate + ATP = 1D-myo-inositol 1,3,4,5-tetrakisphosphate + ADP + H(+). It catalyses the reaction 1D-myo-inositol 1,3,4-trisphosphate + ATP = 1D-myo-inositol 1,3,4,6-tetrakisphosphate + ADP + H(+). Functionally, kinase that can phosphorylate various inositol polyphosphate such as Ins(3,4,5,6)P4 or Ins(1,3,4)P3 and participates in phytic acid biosynthesis in developing seeds. Phytic acid is the primary storage form of phosphorus in cereal grains and other plant seeds. In Oryza sativa subsp. japonica (Rice), this protein is Inositol-tetrakisphosphate 1-kinase 5 (ITPK5).